Here is a 556-residue protein sequence, read N- to C-terminus: 2-succinyl-5-enolpyruvyl-6-hydroxy-3-cyclohexene-1-carboxylate synthase (556 aa).

The protein belongs to the TPP enzyme family. MenD subfamily. As to quaternary structure, homodimer. It depends on Mg(2+) as a cofactor. Mn(2+) is required as a cofactor. The cofactor is thiamine diphosphate.

It catalyses the reaction isochorismate + 2-oxoglutarate + H(+) = 5-enolpyruvoyl-6-hydroxy-2-succinyl-cyclohex-3-ene-1-carboxylate + CO2. It functions in the pathway quinol/quinone metabolism; 1,4-dihydroxy-2-naphthoate biosynthesis; 1,4-dihydroxy-2-naphthoate from chorismate: step 2/7. Its pathway is quinol/quinone metabolism; menaquinone biosynthesis. In terms of biological role, catalyzes the thiamine diphosphate-dependent decarboxylation of 2-oxoglutarate and the subsequent addition of the resulting succinic semialdehyde-thiamine pyrophosphate anion to isochorismate to yield 2-succinyl-5-enolpyruvyl-6-hydroxy-3-cyclohexene-1-carboxylate (SEPHCHC). In Escherichia coli O8 (strain IAI1), this protein is 2-succinyl-5-enolpyruvyl-6-hydroxy-3-cyclohexene-1-carboxylate synthase.